Consider the following 775-residue polypeptide: uncharacterized protein (775 aa).

The next 5 helical transmembrane spans lie at K16 to L36, P585 to L605, V625 to I645, F655 to T675, and G742 to L762.

The protein to L.lactis phage infection protein (PIP).

It is found in the cell membrane. This is an uncharacterized protein from Bacillus subtilis (strain 168).